The primary structure comprises 1174 residues: Ankyrin repeat and LEM domain-containing protein 2 homolog (1174 aa).

Composition is skewed to low complexity over residues 37-56, 150-164, 174-198, and 205-219; these read NPASGSASVASGSPSGSAAS, SSPTSTDNSCSSSPT, LGSNSSMSNLLLSDSPTSSPSSSSN, and QQQMQQQQQQQPQQP. 2 disordered regions span residues 37–74 and 141–230; these read NPASGSASVASGSPSGSAASVQTGNADDGSAATKYEDP and PIIS…PFRA. The stretch at 338-367 is one ANK repeat; sequence RGETPLHFAAKNGHVAMVEVLVSYPECKSL. Disordered stretches follow at residues 519–543 and 961–981; these read AEATSSPKPTKNVPNGTNECEHNNN and GSSSEDEENFRTPPQSLSPGI. The segment covering 521–532 has biased composition (polar residues); that stretch reads ATSSPKPTKNVP. Residues 533-543 show a composition bias toward low complexity; sequence NGTNECEHNNN.

The protein belongs to the ANKLE2 family.

The protein resides in the endoplasmic reticulum. It localises to the nucleus envelope. It is found in the cytoplasm. In terms of biological role, involved in brain development probably by regulating asymmetric division of neuroblasts. Regulates neuroblast asymmetric cell division by controlling asymmetric protein localization of Mira, Baz, Par-6 and aPKC, and spindle alignment. Also, regulates the localization of kinase Ball during mitosis, specifically maintaining Ball in the nucleus during interphase. Required for proper ER and nuclear envelope morphology in neuroblasts. This Drosophila melanogaster (Fruit fly) protein is Ankyrin repeat and LEM domain-containing protein 2 homolog.